Consider the following 165-residue polypeptide: Transmembrane protein 128 (165 aa).

Transmembrane regions (helical) follow at residues 49–69 (NIHSGFWILASIVVTYYVDFF), 81–101 (WFLCGSALLLVSLSIAFYCIV), 119–139 (LIPITTASFIAAGICFNIALW), and 144–164 (FFTPLLLFTQFMGVVMFITLL).

It is found in the membrane. This is Transmembrane protein 128 (TMEM128) from Homo sapiens (Human).